Here is a 285-residue protein sequence, read N- to C-terminus: 2,3,4,5-tetrahydropyridine-2,6-dicarboxylate N-succinyltransferase (285 aa).

The protein belongs to the transferase hexapeptide repeat family.

The protein resides in the cytoplasm. The enzyme catalyses (S)-2,3,4,5-tetrahydrodipicolinate + succinyl-CoA + H2O = (S)-2-succinylamino-6-oxoheptanedioate + CoA. Its pathway is amino-acid biosynthesis; L-lysine biosynthesis via DAP pathway; LL-2,6-diaminopimelate from (S)-tetrahydrodipicolinate (succinylase route): step 1/3. This chain is 2,3,4,5-tetrahydropyridine-2,6-dicarboxylate N-succinyltransferase, found in Beijerinckia indica subsp. indica (strain ATCC 9039 / DSM 1715 / NCIMB 8712).